Consider the following 356-residue polypeptide: Outer membrane protein Omp38 (356 aa).

The signal sequence occupies residues 1 to 19 (MKLSRIALATMLVAAPLAA). One can recognise an OmpA-like domain in the interval 221–339 (ELTEDLNMEL…RVFATITGSR (119 aa)). Residues Asn237, Asp271, Thr273, Asn279, and Arg286 each coordinate meso-2,6-diaminopimelate.

It belongs to the outer membrane OOP (TC 1.B.6) superfamily. As to quaternary structure, homotrimer. Forms a pore with a size of 1.3 nm.

The protein localises to the cell outer membrane. The protein resides in the host mitochondrion. Functions as a porin. Induces apoptosis in human cell lines through caspase-dependent and AIF-dependent pathways. Purified Omp38 enters host cell and localizes to the mitochondria, which presumably leads to a release of proapoptotic molecules such as cytochrome c and AIF (apoptosis-inducing factor). Binds peptidoglycan, contributes to cell wall maintenance. This is Outer membrane protein Omp38 from Acinetobacter baumannii (strain ATCC 19606 / DSM 30007 / JCM 6841 / CCUG 19606 / CIP 70.34 / NBRC 109757 / NCIMB 12457 / NCTC 12156 / 81).